Consider the following 287-residue polypeptide: Zinc finger protein SNAI3 (287 aa).

The SNAG domain stretch occupies residues 1-20 (MPRSFLVKTHSSHRVPNYGK). 4 consecutive C2H2-type zinc fingers follow at residues 147–169 (FECI…QQLH), 178–200 (FTCR…IRTH), 204–226 (CICK…IRTH), and 232–254 (YTCS…LQTH). The C2H2-type 5; degenerate zinc-finger motif lies at 260–282 (YRCAVCPKAFSRMSLLARHEEAG).

The protein belongs to the snail C2H2-type zinc-finger protein family. Highly expressed in skeletal muscle and thymus. Lower expression in heart, lung and spleen.

It is found in the nucleus. Seems to inhibit myoblast differentiation. Transcriptional repressor of E-box-dependent transactivation of downstream myogenic bHLHs genes. Binds preferentially to the canonical E-box sequences 5'-CAGGTG-3' and 5'-CACCTG-3'. The protein is Zinc finger protein SNAI3 (Snai3) of Mus musculus (Mouse).